Consider the following 175-residue polypeptide: Ribosome maturation factor RimM (175 aa).

The PRC barrel domain maps to 98–175 (EGEYYWYQLE…EMRVDWDADF (78 aa)).

This sequence belongs to the RimM family. In terms of assembly, binds ribosomal protein uS19.

It localises to the cytoplasm. In terms of biological role, an accessory protein needed during the final step in the assembly of 30S ribosomal subunit, possibly for assembly of the head region. Essential for efficient processing of 16S rRNA. May be needed both before and after RbfA during the maturation of 16S rRNA. It has affinity for free ribosomal 30S subunits but not for 70S ribosomes. This chain is Ribosome maturation factor RimM, found in Pseudomonas paraeruginosa (strain DSM 24068 / PA7) (Pseudomonas aeruginosa (strain PA7)).